Consider the following 148-residue polypeptide: C-C motif chemokine 2 (148 aa).

An N-terminal signal peptide occupies residues 1 to 23 (MQVPVMLLGLLFTVAGWSIHVLA). Residue glutamine 24 is modified to Pyrrolidone carboxylic acid. 2 cysteine pairs are disulfide-bonded: cysteine 34–cysteine 59 and cysteine 35–cysteine 75. An N-linked (GlcNAc...) asparagine glycan is attached at asparagine 126.

It belongs to the intercrine beta (chemokine CC) family. In terms of assembly, monomer or homodimer; in equilibrium. Is tethered on endothelial cells by glycosaminoglycan (GAG) side chains of proteoglycans. Interacts with TNFAIP6 (via Link domain). In terms of processing, processing at the N-terminus can regulate receptor and target cell selectivity. Deletion of the N-terminal residue converts it from an activator of basophil to an eosinophil chemoattractant. Post-translationally, N-Glycosylated.

It is found in the secreted. Functionally, acts as a ligand for C-C chemokine receptor CCR2. Signals through binding and activation of CCR2 and induces a strong chemotactic response and mobilization of intracellular calcium ions. Exhibits a chemotactic activity for monocytes and basophils but not neutrophils or eosinophils. Plays an important role in mediating peripheral nerve injury-induced neuropathic pain. Increases NMDA-mediated synaptic transmission in both dopamine D1 and D2 receptor-containing neurons, which may be caused by MAPK/ERK-dependent phosphorylation of GRIN2B/NMDAR2B. In Mus musculus (Mouse), this protein is C-C motif chemokine 2 (Ccl2).